The sequence spans 229 residues: Ribonuclease HII (229 aa).

The RNase H type-2 domain maps to 34–223 (WPVAGADEAG…LRKTENGPET (190 aa)). 3 residues coordinate a divalent metal cation: D40, E41, and D131. Residues 209-229 (MSFRPLRKTENGPETDELLSE) are disordered.

It belongs to the RNase HII family. Mn(2+) serves as cofactor. The cofactor is Mg(2+).

The protein resides in the cytoplasm. The enzyme catalyses Endonucleolytic cleavage to 5'-phosphomonoester.. In terms of biological role, endonuclease that specifically degrades the RNA of RNA-DNA hybrids. The chain is Ribonuclease HII from Rhizobium johnstonii (strain DSM 114642 / LMG 32736 / 3841) (Rhizobium leguminosarum bv. viciae).